The chain runs to 414 residues: Histidine--tRNA ligase (414 aa).

This sequence belongs to the class-II aminoacyl-tRNA synthetase family. In terms of assembly, homodimer.

The protein localises to the cytoplasm. It catalyses the reaction tRNA(His) + L-histidine + ATP = L-histidyl-tRNA(His) + AMP + diphosphate + H(+). The polypeptide is Histidine--tRNA ligase (Rickettsia africae (strain ESF-5)).